The primary structure comprises 557 residues: Suprabasin (557 aa).

Positions 1–23 (MHLASLLSSCSLLLLLGALPGWA) are cleaved as a signal peptide. Disordered regions lie at residues 150–175 (RFGQ…GAHH), 422–441 (GQGA…KVAQ), 464–490 (AAGQ…GKQE), and 509–533 (NQLL…TTLT). Over residues 153–175 (QGAHHATGQAGKEAEKFGQGAHH) the composition is skewed to low complexity. A compositionally biased stretch (low complexity) spans 476-487 (GQGVHHAAGQAG).

It is found in the secreted. The polypeptide is Suprabasin (SBSN) (Bos taurus (Bovine)).